The sequence spans 220 residues: Transcriptional regulatory protein SpaR (220 aa).

Residues 3–115 enclose the Response regulatory domain; that stretch reads KILAVDDEKD…ELSARVNAHL (113 aa). D51 bears the 4-aspartylphosphate mark. Residues 124–220 constitute a DNA-binding region (ompR/PhoB-type); it reads QSKRVISGFL…TVWGVGYKWE (97 aa).

In terms of processing, phosphorylated by SpaK.

The protein localises to the cytoplasm. Its function is as follows. Member of the two-component regulatory system SpaK/SpaR involved in the regulation of the biosynthesis of lantibiotic subtilin. SpaR may function as a regulatory protein. This Bacillus subtilis protein is Transcriptional regulatory protein SpaR (spaR).